Reading from the N-terminus, the 380-residue chain is Glucose ABC transporter permease protein TsgB13 (380 aa).

Transmembrane regions (helical) follow at residues 20-40 (GTPV…LVAL), 59-81 (QFGL…AVYL), 94-114 (GQLL…SLPA), 115-135 (VALL…WAGI), 148-166 (IITS…SYLL), 202-222 (IPLF…VVAT), 255-275 (VYLF…IAEI), 282-301 (FRAA…ALLG), 305-325 (AVKV…GSSV), and 328-348 (AFGV…LFLI).

It belongs to the binding-protein-dependent transport system permease family. As to quaternary structure, the complex is composed of two ATP-binding proteins (TsgD13), two transmembrane proteins (TsgB13 and TsgC13) and a solute-binding protein (TsgA13).

The protein resides in the cell membrane. Its function is as follows. Part of an ABC transporter complex involved in glucose import. Responsible for the translocation of the substrate across the membrane. The chain is Glucose ABC transporter permease protein TsgB13 (tsgB13) from Haloferax volcanii (strain ATCC 29605 / DSM 3757 / JCM 8879 / NBRC 14742 / NCIMB 2012 / VKM B-1768 / DS2) (Halobacterium volcanii).